Reading from the N-terminus, the 429-residue chain is Adenylosuccinate synthetase (429 aa).

Residues 12 to 18 (GDEGKGK) and 40 to 42 (GHT) each bind GTP. Asp-13 (proton acceptor) is an active-site residue. Positions 13 and 40 each coordinate Mg(2+). IMP is bound by residues 13–16 (DEGK), 38–41 (NAGH), Thr-128, Arg-142, Gln-223, Thr-238, and Arg-302. His-41 (proton donor) is an active-site residue. 298–304 (TVTGRPR) contributes to the substrate binding site. GTP-binding positions include Arg-304, 330 to 332 (LLD), and 412 to 414 (SVG).

It belongs to the adenylosuccinate synthetase family. As to quaternary structure, homodimer. Requires Mg(2+) as cofactor.

It localises to the cytoplasm. It carries out the reaction IMP + L-aspartate + GTP = N(6)-(1,2-dicarboxyethyl)-AMP + GDP + phosphate + 2 H(+). It functions in the pathway purine metabolism; AMP biosynthesis via de novo pathway; AMP from IMP: step 1/2. Plays an important role in the de novo pathway of purine nucleotide biosynthesis. Catalyzes the first committed step in the biosynthesis of AMP from IMP. The polypeptide is Adenylosuccinate synthetase (Limosilactobacillus fermentum (strain NBRC 3956 / LMG 18251) (Lactobacillus fermentum)).